A 390-amino-acid chain; its full sequence is MECPFQIQVCISDRFFAFPHNLVEPQSDVGNKLIENLIVYVPTDDDRLYIDKKQFPKFNSVLVYRHEHDVNIDSRSPKKTASATIVYWNPLVPITEIGAGETRVFSVLLTNNLFYCNTMIVHHENPKCPIEFTYPETDMQSACSALLKNRNGQSVPPPIKSNLRPIACEIPLSHFKELVESNDFLLCFNLETSTMVKILSLKRIFCIFQYRKQPARYVINLPHEEIDNLYNKLNWERTRRLMKGDVPSNCATVNRSSLKYIKQAQSLLGIPDYSQTVVDFVKMFQKIIFPYQLVPNVIIKLNNFDQMVSSAPNKAEPYKKIRLFCKNDSIAISSSGIVPINMPDFSPPNTFDYSDYANRTNINFVTQRVLTDGGFSSGITVTPVKYNYYL.

Its subcellular location is the host cytoplasm. It localises to the host nucleus. Plays a role in the transport of the budded virion (BV) to the host nucleus and for occlusion of viral progeny. This Lepidoptera (butterflies and moths) protein is Protein AC109 (ORF109).